We begin with the raw amino-acid sequence, 64 residues long: Alpha-like toxin BmK M2 (64 aa).

One can recognise an LCN-type CS-alpha/beta domain in the interval 2 to 64 (RDAYIAKPHN…VPIRVPGKCH (63 aa)). Intrachain disulfides connect Cys12-Cys63, Cys16-Cys36, Cys22-Cys46, and Cys26-Cys48.

This sequence belongs to the long (4 C-C) scorpion toxin superfamily. Sodium channel inhibitor family. Alpha subfamily. Expressed by the venom gland.

It localises to the secreted. Alpha toxins bind voltage-independently at site-3 of sodium channels (Nav) and inhibit the inactivation of the activated channels, thereby blocking neuronal transmission. This toxin is active against both mammals and insects, and is classified as an alpha-like toxin. This chain is Alpha-like toxin BmK M2, found in Olivierus martensii (Manchurian scorpion).